Consider the following 596-residue polypeptide: V-type ATP synthase alpha chain (596 aa).

233-240 (GPFGAGKT) is a binding site for ATP.

It belongs to the ATPase alpha/beta chains family.

The enzyme catalyses ATP + H2O + 4 H(+)(in) = ADP + phosphate + 5 H(+)(out). Functionally, produces ATP from ADP in the presence of a proton gradient across the membrane. The V-type alpha chain is a catalytic subunit. This chain is V-type ATP synthase alpha chain, found in Streptococcus gordonii (strain Challis / ATCC 35105 / BCRC 15272 / CH1 / DL1 / V288).